The following is a 194-amino-acid chain: Adapter protein MecA 2 (194 aa).

The protein belongs to the MecA family. Homodimer.

Enables the recognition and targeting of unfolded and aggregated proteins to the ClpC protease or to other proteins involved in proteolysis. Also involved in Spx degradation by ClpC. Acts negatively in the development of competence by binding ComK and recruiting it to the ClpCP protease. When overexpressed, inhibits sporulation. This is Adapter protein MecA 2 (mecB) from Bacillus subtilis (strain 168).